The primary structure comprises 893 residues: Major vault protein (893 aa).

A2 carries the N-acetylalanine modification. MVP repeat units follow at residues 2–56, 57–111, 112–164, 165–217, 218–272, 273–323, 324–379, 380–457, and 458–520; these read ATEE…VPPR, HYCT…DITP, LQVV…EIIQ, ATII…DLVD, AVIL…GVVP, ITTL…IQDV, YVLS…ERQA, IPLD…KTRV, and VSYR…LLGP. A Glycyl lysine isopeptide (Lys-Gly) (interchain with G-Cter in SUMO2) cross-link involves residue K444. Position 445 is a phosphoserine (S445). K704 participates in a covalent cross-link: Glycyl lysine isopeptide (Lys-Gly) (interchain with G-Cter in SUMO2). The interval 856–893 is disordered; that stretch reads QPLGRRVASGPSPGEGISPQSAQAPQAPGDNHVVPVLR.

The vault ribonucleoprotein particle is a huge (400 A x 670 A) cage structure of 12.9 MDa. It consists of a dimer of half-vaults, with each half-vault comprising 39 identical major vault protein (MVP) chains, PARP4 and one or more vault RNAs (vRNAs). Interacts with TEP1. Interacts with PTEN and activated MAPK1. The phosphorylated protein interacts with the SH2 domains of PTPN11 and SRC. Interacts with APEX1. May interact with ZNF540. In terms of processing, phosphorylated on Tyr residues after EGF stimulation. Post-translationally, dephosphorylated by PTPN11. Present in most normal tissues. Higher expression observed in epithelial cells with secretory and excretory functions, as well as in cells chronically exposed to xenobiotics, such as bronchial cells and cells lining the intestine. Overexpressed in many multidrug-resistant cancer cells.

The protein localises to the cytoplasm. It is found in the nucleus. Its subcellular location is the nuclear pore complex. It localises to the perinuclear region. Functionally, required for normal vault structure. Vaults are multi-subunit structures that may act as scaffolds for proteins involved in signal transduction. Vaults may also play a role in nucleo-cytoplasmic transport. Down-regulates IFNG-mediated STAT1 signaling and subsequent activation of JAK. Down-regulates SRC activity and signaling through MAP kinases. In Homo sapiens (Human), this protein is Major vault protein (MVP).